A 311-amino-acid polypeptide reads, in one-letter code: Methionyl-tRNA formyltransferase (311 aa).

Residue 112–115 (SLLP) participates in (6S)-5,6,7,8-tetrahydrofolate binding.

Belongs to the Fmt family.

It catalyses the reaction L-methionyl-tRNA(fMet) + (6R)-10-formyltetrahydrofolate = N-formyl-L-methionyl-tRNA(fMet) + (6S)-5,6,7,8-tetrahydrofolate + H(+). Its function is as follows. Attaches a formyl group to the free amino group of methionyl-tRNA(fMet). The formyl group appears to play a dual role in the initiator identity of N-formylmethionyl-tRNA by promoting its recognition by IF2 and preventing the misappropriation of this tRNA by the elongation apparatus. The protein is Methionyl-tRNA formyltransferase of Bradyrhizobium diazoefficiens (strain JCM 10833 / BCRC 13528 / IAM 13628 / NBRC 14792 / USDA 110).